Here is a 74-residue protein sequence, read N- to C-terminus: Amphipathic peptide CT1 (74 aa).

Positions 1–23 are cleaved as a signal peptide; that stretch reads MKTQIVILFISMIMLQMFVQIEG. A Valine amide modification is found at Val-37. Positions 41 to 74 are excised as a propeptide; the sequence is GLRNLDDLDDLDLDHLFDSDVSDADLRLLKQMFR.

Belongs to the non-disulfide-bridged peptide (NDBP) superfamily. Short antimicrobial peptide (group 4) family. In terms of tissue distribution, expressed by the venom gland.

The protein localises to the secreted. The protein resides in the target cell membrane. Antimicrobial peptide that is rapidly bactericidal against Gram-positive bacteria (MIC=12.5 ug/ml against S.aureus, and MIC=100 ug/ml against M.luteus). Is also active against clinical antibiotics-resistant bacterial strains. This is Amphipathic peptide CT1 from Scorpiops tibetanus (Scorpion).